The primary structure comprises 1455 residues: Fanconi anemia group A protein (1455 aa).

The short motif at 18-34 (RRRAWAELLAGRVKREK) is the Nuclear localization signal element. The residue at position 1449 (serine 1449) is a Phosphoserine.

As to quaternary structure, belongs to the multisubunit FA complex composed of FANCA, FANCB, FANCC, FANCE, FANCF, FANCG, FANCL/PHF9 and FANCM. The complex is not found in FA patients. In complex with FANCF, FANCG and FANCL, but not with FANCC, nor FANCE, interacts with HES1; this interaction may be essential for the stability and nuclear localization of FA core complex proteins. The complex with FANCC and FANCG may also include EIF2AK2 and HSP70. Interacts with FAAP20/C1orf86; interaction is direct. Phosphorylation is required for the formation of the nuclear complex. Not phosphorylated in cells derived from groups A, B, C, E, F, G, and H.

It is found in the nucleus. The protein localises to the cytoplasm. DNA repair protein that may operate in a postreplication repair or a cell cycle checkpoint function. May be involved in interstrand DNA cross-link repair and in the maintenance of normal chromosome stability. The sequence is that of Fanconi anemia group A protein (FANCA) from Homo sapiens (Human).